We begin with the raw amino-acid sequence, 79 residues long: Small ribosomal subunit protein uS17 (79 aa).

Belongs to the universal ribosomal protein uS17 family. As to quaternary structure, part of the 30S ribosomal subunit.

Functionally, one of the primary rRNA binding proteins, it binds specifically to the 5'-end of 16S ribosomal RNA. The chain is Small ribosomal subunit protein uS17 from Rhodospirillum rubrum (strain ATCC 11170 / ATH 1.1.1 / DSM 467 / LMG 4362 / NCIMB 8255 / S1).